Reading from the N-terminus, the 46-residue chain is uncharacterized protein (46 aa).

A helical membrane pass occupies residues 12 to 34 (HFNHFVIALSFIYGLTELGYLLL).

It localises to the cell membrane. This is an uncharacterized protein from Bacillus subtilis (strain 168).